A 109-amino-acid chain; its full sequence is Latartoxin-2a (109 aa).

Positions M1–S19 are cleaved as a signal peptide. Positions K20 to R37 are cleaved as a propeptide — removed in mature form. The short motif at S34–R37 is the Processing quadruplet motif element. 5 disulfide bridges follow: C39-C56, C46-C67, C55-C81, C69-C79, and C72-C93. Position 108 is a valine amide (V108).

Belongs to the neurotoxin 19 (CSTX) family. 11 (latartoxin) subfamily. Post-translationally, contains 5 disulfide bonds. In terms of processing, cleavage of the propeptide depends on the processing quadruplet motif (XXXR, with at least one of X being E). As to expression, expressed by the venom gland.

The protein localises to the secreted. In terms of biological role, insect toxin. Causes paralysis in larvae of C.vicina by depolarizing membranes at the neuromuscular junction. The protein is Latartoxin-2a of Lachesana tarabaevi (Spider).